Consider the following 339-residue polypeptide: Phosphoribosylformylglycinamidine cyclo-ligase (339 aa).

Belongs to the AIR synthase family.

It localises to the cytoplasm. It carries out the reaction 2-formamido-N(1)-(5-O-phospho-beta-D-ribosyl)acetamidine + ATP = 5-amino-1-(5-phospho-beta-D-ribosyl)imidazole + ADP + phosphate + H(+). The protein operates within purine metabolism; IMP biosynthesis via de novo pathway; 5-amino-1-(5-phospho-D-ribosyl)imidazole from N(2)-formyl-N(1)-(5-phospho-D-ribosyl)glycinamide: step 2/2. This Desulfitobacterium hafniense (strain DSM 10664 / DCB-2) protein is Phosphoribosylformylglycinamidine cyclo-ligase.